A 646-amino-acid polypeptide reads, in one-letter code: Threonine--tRNA ligase (646 aa).

Residues 1–61 (MIKITFPDGS…NEDADFVLYK (61 aa)) form the TGS domain. Residues 242–541 (DHRKIGKEMQ…LIEHTAGKFP (300 aa)) form a catalytic region. Residues Cys337, His388, and His518 each contribute to the Zn(2+) site.

It belongs to the class-II aminoacyl-tRNA synthetase family. In terms of assembly, homodimer. Zn(2+) serves as cofactor.

The protein resides in the cytoplasm. It carries out the reaction tRNA(Thr) + L-threonine + ATP = L-threonyl-tRNA(Thr) + AMP + diphosphate + H(+). Catalyzes the attachment of threonine to tRNA(Thr) in a two-step reaction: L-threonine is first activated by ATP to form Thr-AMP and then transferred to the acceptor end of tRNA(Thr). Also edits incorrectly charged L-seryl-tRNA(Thr). This Bacteroides thetaiotaomicron (strain ATCC 29148 / DSM 2079 / JCM 5827 / CCUG 10774 / NCTC 10582 / VPI-5482 / E50) protein is Threonine--tRNA ligase.